The following is a 159-amino-acid chain: Glucosamine 6-phosphate N-acetyltransferase (159 aa).

The residue at position 2 (Ser2) is an N-acetylserine. D-glucosamine 6-phosphate contacts are provided by residues Thr28, 86–89, and 98–100; these read KIIH and EDI. One can recognise an N-acetyltransferase domain in the interval 28-159; it reads TTVGTITPES…NAGVEMQIRK (132 aa). Residues 100 to 102 and 108 to 113 contribute to the acetyl-CoA site; these read IAV and GQGLGK. D-glucosamine 6-phosphate contacts are provided by residues 129 to 130 and Asp134; that span reads YK. 143-145 is a binding site for acetyl-CoA; the sequence is YEK. Residue Arg158 coordinates D-glucosamine 6-phosphate.

It belongs to the acetyltransferase family. GNA1 subfamily. In terms of assembly, homodimer.

The catalysed reaction is D-glucosamine 6-phosphate + acetyl-CoA = N-acetyl-D-glucosamine 6-phosphate + CoA + H(+). It participates in nucleotide-sugar biosynthesis; UDP-N-acetyl-alpha-D-glucosamine biosynthesis; N-acetyl-alpha-D-glucosamine 1-phosphate from alpha-D-glucosamine 6-phosphate (route I): step 1/2. This Saccharomyces cerevisiae (strain ATCC 204508 / S288c) (Baker's yeast) protein is Glucosamine 6-phosphate N-acetyltransferase (GNA1).